A 1227-amino-acid chain; its full sequence is Beta-alanyl-bioamine nonribosomal peptide synthetase (1227 aa).

Residues 1–850 are adenylation; sequence MPQSTAQLKS…FGKNSRDFKL (850 aa). A Carrier domain is found at 851–931; the sequence is SRGRERARKV…SILTSLQNTE (81 aa). S892 is modified (O-(pantetheine 4'-phosphoryl)serine). Residues 932–1227 are condensation; sequence SDFLKTQEPF…YMIKELNPSS (296 aa).

It belongs to the NRP synthetase family. Requires pantetheine 4'-phosphate as cofactor. In terms of tissue distribution, in virgin and paired males, bilaterally expressed in some cells in the head. During pairing, expressed throughout the ventral side of the body probably in ciliated neurons. Highly expressed in virgin females in cells throughout the body and only weakly expressed in sexually mature females. In virgin females, expressed in some cells in the head and on the dorsal surface and lateral edges of body.

The enzyme catalyses tryptamine + beta-alanine + ATP = beta-alanyl-tryptamine + AMP + diphosphate + H(+). It carries out the reaction beta-alanine + ATP + H(+) = beta-alanyl-5'-AMP + diphosphate. The catalysed reaction is beta-alanyl-5'-AMP + holo-[peptidyl-carrier protein] = beta-alanyl-[peptidyl-carrier protein] + AMP + H(+). It catalyses the reaction beta-alanyl-[peptidyl-carrier protein] + tryptamine = beta-alanyl-tryptamine + holo-[peptidyl-carrier protein] + H(+). In terms of biological role, catalyzes the condensation of beta-alanine with tryptamine to form beta-alanyl-tryptamine (BATT). Beta-alanyl-tryptamine is an essential pheromone produced by the male that stimulates female sexual development during pairing. This Schistosoma mansoni (Blood fluke) protein is Beta-alanyl-bioamine nonribosomal peptide synthetase.